The primary structure comprises 284 residues: Ubiquinone biosynthesis protein COQ4, mitochondrial (284 aa).

4 residues coordinate Zn(2+): His-165, Asp-166, His-169, and Glu-181.

The protein belongs to the COQ4 family. Component of a multi-subunit COQ enzyme complex, composed of at least COQ3, COQ4, COQ5, COQ6, COQ7 and COQ9. Zn(2+) is required as a cofactor.

It is found in the mitochondrion inner membrane. The enzyme catalyses a 4-hydroxy-3-methoxy-5-(all-trans-polyprenyl)benzoate + H(+) = a 2-methoxy-6-(all-trans-polyprenyl)phenol + CO2. It participates in cofactor biosynthesis; ubiquinone biosynthesis. Lyase that catalyzes the C1-decarboxylation of 4-hydroxy-3-methoxy-5-(all-trans-polyprenyl)benzoic acid into 2-methoxy-6-(all-trans-polyprenyl)phenol during ubiquinone biosynthesis. This chain is Ubiquinone biosynthesis protein COQ4, mitochondrial, found in Blastomyces gilchristii (strain SLH14081) (Blastomyces dermatitidis).